We begin with the raw amino-acid sequence, 276 residues long: Large ribosomal subunit protein uL2 (276 aa).

Disordered regions lie at residues Met-1–Lys-61 and Ala-224–Asn-276. Residues Gly-15–Lys-31 are compositionally biased toward basic and acidic residues.

The protein belongs to the universal ribosomal protein uL2 family. As to quaternary structure, part of the 50S ribosomal subunit. Forms a bridge to the 30S subunit in the 70S ribosome.

Its function is as follows. One of the primary rRNA binding proteins. Required for association of the 30S and 50S subunits to form the 70S ribosome, for tRNA binding and peptide bond formation. It has been suggested to have peptidyltransferase activity; this is somewhat controversial. Makes several contacts with the 16S rRNA in the 70S ribosome. The chain is Large ribosomal subunit protein uL2 from Treponema denticola (strain ATCC 35405 / DSM 14222 / CIP 103919 / JCM 8153 / KCTC 15104).